Reading from the N-terminus, the 102-residue chain is Urease subunit beta (102 aa).

This sequence belongs to the urease beta subunit family. Heterotrimer of UreA (gamma), UreB (beta) and UreC (alpha) subunits. Three heterotrimers associate to form the active enzyme.

The protein localises to the cytoplasm. The catalysed reaction is urea + 2 H2O + H(+) = hydrogencarbonate + 2 NH4(+). It functions in the pathway nitrogen metabolism; urea degradation; CO(2) and NH(3) from urea (urease route): step 1/1. The protein is Urease subunit beta of Acinetobacter baumannii (strain AB307-0294).